The primary structure comprises 447 residues: Probable glycine dehydrogenase (decarboxylating) subunit 1 (447 aa).

It belongs to the GcvP family. N-terminal subunit subfamily. As to quaternary structure, the glycine cleavage system is composed of four proteins: P, T, L and H. In this organism, the P 'protein' is a heterodimer of two subunits.

It catalyses the reaction N(6)-[(R)-lipoyl]-L-lysyl-[glycine-cleavage complex H protein] + glycine + H(+) = N(6)-[(R)-S(8)-aminomethyldihydrolipoyl]-L-lysyl-[glycine-cleavage complex H protein] + CO2. In terms of biological role, the glycine cleavage system catalyzes the degradation of glycine. The P protein binds the alpha-amino group of glycine through its pyridoxal phosphate cofactor; CO(2) is released and the remaining methylamine moiety is then transferred to the lipoamide cofactor of the H protein. The polypeptide is Probable glycine dehydrogenase (decarboxylating) subunit 1 (Bacillus cereus (strain G9842)).